The sequence spans 276 residues: F-actin-capping protein subunit alpha (276 aa).

It belongs to the F-actin-capping protein alpha subunit family. Heterodimer of an alpha and a beta subunit.

It is found in the cytoplasm. The protein localises to the cytoskeleton. F-actin-capping proteins bind in a Ca(2+)-independent manner to the fast growing ends of actin filaments (barbed end) thereby blocking the exchange of subunits at these ends. Unlike other capping proteins (such as gelsolin and severin), these proteins do not sever actin filaments. This Aspergillus fumigatus (strain ATCC MYA-4609 / CBS 101355 / FGSC A1100 / Af293) (Neosartorya fumigata) protein is F-actin-capping protein subunit alpha (cap1).